A 181-amino-acid chain; its full sequence is MRPFHGTTVLCVRRDGKVVMASDGQVTLDKTVMKSTARKVRRLAEGAVLAGFAGATADAFQLFELFEKKLKEHARSLPRAAVELAKQWRTDRMLRRLEAMLVVADREHILVLSGAGDVIEPDPVPGGGVVAIGSGAPYAVAAARALLGHSALPARQVAEEAMKLAAEICIYTNANLTFEEL.

Thr-7 is an active-site residue. The Na(+) site is built by Ala-166, Cys-169, and Thr-172.

It belongs to the peptidase T1B family. HslV subfamily. As to quaternary structure, a double ring-shaped homohexamer of HslV is capped on each side by a ring-shaped HslU homohexamer. The assembly of the HslU/HslV complex is dependent on binding of ATP.

It is found in the cytoplasm. The enzyme catalyses ATP-dependent cleavage of peptide bonds with broad specificity.. Its activity is regulated as follows. Allosterically activated by HslU binding. Its function is as follows. Protease subunit of a proteasome-like degradation complex believed to be a general protein degrading machinery. The polypeptide is ATP-dependent protease subunit HslV (Anaeromyxobacter sp. (strain Fw109-5)).